The primary structure comprises 367 residues: Protein pxr1 (367 aa).

Disordered regions lie at residues 1–28 and 156–336; these read MGLS…TDSF and KALK…PMGI. Positions 15–27 are enriched in polar residues; it reads DPNNTKWSGNTDS. The G-patch domain occupies 25–79; sequence TDSFGHRMMKSQGWTPGEYLGAKDAAHAEFHTAANASHIRVVIKDNNLGLGAKIG. The segment covering 167–182 has biased composition (acidic residues); sequence SSDDSDSSSDEEEEEK. Composition is skewed to basic residues over residues 209 to 221, 236 to 248, and 265 to 277; these read SKKS…SKKR, KSKK…KSKS, and KARK…KKRR. Residues 282-296 show a composition bias toward low complexity; the sequence is ATAGADTEETSSTSK. The span at 297–309 shows a compositional bias: basic residues; that stretch reads SSKKNSKKDKHKS. The span at 310–328 shows a compositional bias: low complexity; sequence SSASESSTKESTPTVTESS.

Belongs to the PINX1 family.

It localises to the nucleus. The protein resides in the nucleolus. In terms of biological role, involved in rRNA-processing at A0, A1 and A2 sites and negatively regulates telomerase. This Sclerotinia sclerotiorum (strain ATCC 18683 / 1980 / Ss-1) (White mold) protein is Protein pxr1 (pxr1).